The following is a 296-amino-acid chain: HVA22-like protein i (296 aa).

Residues 146–296 (STPRPQPPQK…LRKTRSEESR (151 aa)) form a disordered region. Residues 180–193 (VSLSSSSSSSSSEN) are compositionally biased toward low complexity. Over residues 223–233 (AGTTQIAQKSV) the composition is skewed to polar residues. Residues 251–261 (QIEEVEGEAES) show a composition bias toward acidic residues. A compositionally biased stretch (basic and acidic residues) spans 270 to 281 (GPKETVMEETIR).

Belongs to the DP1 family.

The protein is HVA22-like protein i (HVA22I) of Arabidopsis thaliana (Mouse-ear cress).